Reading from the N-terminus, the 185-residue chain is Ribosome-recycling factor (185 aa).

Belongs to the RRF family.

Its subcellular location is the cytoplasm. Its function is as follows. Responsible for the release of ribosomes from messenger RNA at the termination of protein biosynthesis. May increase the efficiency of translation by recycling ribosomes from one round of translation to another. This chain is Ribosome-recycling factor, found in Bacillus anthracis (strain A0248).